We begin with the raw amino-acid sequence, 312 residues long: Protein-methionine-sulfoxide reductase catalytic subunit MsrP (312 aa).

Positions 1–45 form a signal peptide, tat-type signal; it reads MPVYRPPRIAASEITPERFFLDRRSFLAAAGGLVLGGTGMAHAAA. Residues asparagine 69, 72–73, cysteine 126, threonine 161, asparagine 211, arginine 216, and 227–229 each bind Mo-molybdopterin; these read YE and GIK.

This sequence belongs to the MsrP family. In terms of assembly, heterodimer of a catalytic subunit (MsrP) and a heme-binding subunit (MsrQ). It depends on Mo-molybdopterin as a cofactor. In terms of processing, predicted to be exported by the Tat system. The position of the signal peptide cleavage has not been experimentally proven.

The protein localises to the periplasm. The catalysed reaction is L-methionyl-[protein] + a quinone + H2O = L-methionyl-(S)-S-oxide-[protein] + a quinol. It catalyses the reaction L-methionyl-[protein] + a quinone + H2O = L-methionyl-(R)-S-oxide-[protein] + a quinol. Its function is as follows. Part of the MsrPQ system that repairs oxidized periplasmic proteins containing methionine sulfoxide residues (Met-O), using respiratory chain electrons. Thus protects these proteins from oxidative-stress damage caused by reactive species of oxygen and chlorine generated by the host defense mechanisms. MsrPQ is essential for the maintenance of envelope integrity under bleach stress, rescuing a wide series of structurally unrelated periplasmic proteins from methionine oxidation. The catalytic subunit MsrP is non-stereospecific, being able to reduce both (R-) and (S-) diastereoisomers of methionine sulfoxide. The protein is Protein-methionine-sulfoxide reductase catalytic subunit MsrP of Sinorhizobium fredii (strain NBRC 101917 / NGR234).